We begin with the raw amino-acid sequence, 114 residues long: UPF0060 membrane protein GDI3492/Gdia_2889 (114 aa).

Helical transmembrane passes span 8 to 28, 35 to 55, 64 to 84, and 92 to 112; these read FAVY…WWCW, AWVL…LTLV, FAAY…LVEG, and AAGV…GRGA.

This sequence belongs to the UPF0060 family.

It localises to the cell inner membrane. This is UPF0060 membrane protein GDI3492/Gdia_2889 from Gluconacetobacter diazotrophicus (strain ATCC 49037 / DSM 5601 / CCUG 37298 / CIP 103539 / LMG 7603 / PAl5).